The sequence spans 758 residues: MSISRRSFLQGVGIGCSACALGAFPPGALARNPIAGINGKTTLTPSLCEMCSFRCPIQAQVVNNKTVFIQGNPSAPQQGTRICARGGSGVSLVNDPQRIVKPMKRTGPRGDGEWQVISWQQAYQEIAAKMNAIKAQHGPESVAFSSKSGSLSSHLFHLATAFGSPNTFTHASTCPAGKAIAAKVMMGGDLAMDIANTRYLVSFGHNLYEGIEVADTHELMTAQEKGAKMVSFDPRLSIFSSKADEWHAIRPGGDLAVLLAMCHVMIDEQLYDASFVERYTSGFEQLAQAVKETTPEWAAAQADVPADVIVRVTRELAACAPHAIVSPGHRATFSQEEIDMRRMIFTLNVLLGNIEREGGLYQKKNASVYNKLAGEKVAPTLAKLNIKNMPKPTAQRIDLVAPQFKYIAAGGGVVQSIIDSALTQKPYPIKAWIMSRHNPFQTVTCRSDLVKTVEQLDLVVSCDVYLSESAAYADYLLPECTYLERDEEVSDMSGLHPAYALRQQVVEPIGEARPSWQIWKELGEQLGLGQYYPWQDMQTRQLYQLNGDHALAKELRQKGYLEWGVPLLLREPESVRQFTARYPGAIATDSDNTYGEQLRFKSPSGKIELYSATLEELLPGYGVPRVRDFALKKENELYFIQGKVAVHTNGATQYVPLLSELMWDNAVWVHPQTAQEKGIKTGDEIWLENATGKEKGKALVTPGIRPDTLFVYMGFGAKAGAKTAATTHGIHCGNLLPHVTSPVSGTVVHTAGVTLSRA.

Residues 1-30 (MSISRRSFLQGVGIGCSACALGAFPPGALA) constitute a signal peptide (tat-type signal). A 4Fe-4S Mo/W bis-MGD-type domain is found at 41–97 (TTLTPSLCEMCSFRCPIQAQVVNNKTVFIQGNPSAPQQGTRICARGGSGVSLVNDPQ). Residues cysteine 48, cysteine 51, cysteine 55, and cysteine 83 each coordinate [4Fe-4S] cluster.

The protein belongs to the prokaryotic molybdopterin-containing oxidoreductase family. Composed of three subunits: PhsA, PhsB and PhsC. The cofactor is [4Fe-4S] cluster. Requires Mo-bis(molybdopterin guanine dinucleotide) as cofactor. Predicted to be exported by the Tat system. The position of the signal peptide cleavage has not been experimentally proven.

The protein resides in the periplasm. It carries out the reaction a quinone + hydrogen sulfide + sulfite + 2 H(+) = thiosulfate + a quinol. Functionally, component of the PhsABC thiosulfate reductase that catalyzes the reduction of thiosulfate to sulfite and hydrogen sulfide, with menaquinol as the sole electron donor. Proton motive force (PMF) is required to drive transmembrane electron transfer within the reductase. The PhsA subunit contains the active site molybdenum-bis(molybdopterin guanine dinucleotide) (Mo-bis-MGD) cofactor. This is Thiosulfate reductase molybdopterin-containing subunit PhsA from Salmonella typhimurium (strain LT2 / SGSC1412 / ATCC 700720).